Consider the following 138-residue polypeptide: Small ribosomal subunit protein uS11c (138 aa).

Residues 1-24 form a disordered region; sequence MAKSPPRSGSRRPGRIGSRKSGRR. The span at 9–24 shows a compositional bias: basic residues; it reads GSRRPGRIGSRKSGRR.

This sequence belongs to the universal ribosomal protein uS11 family. Part of the 30S ribosomal subunit.

It is found in the plastid. It localises to the chloroplast. The protein is Small ribosomal subunit protein uS11c of Citrus sinensis (Sweet orange).